The sequence spans 349 residues: Peroxisomal acyl-coenzyme A thioester hydrolase 1 (349 aa).

Residues D259, S282, and Q333 each act as charge relay system in the active site. The short motif at 347 to 349 (AKF) is the Microbody targeting signal element.

It belongs to the C/M/P thioester hydrolase family.

It is found in the peroxisome. The catalysed reaction is hexadecanoyl-CoA + H2O = hexadecanoate + CoA + H(+). Acyl-coenzyme A (acyl-CoA) thioesterases are a group of enzymes that catalyze the hydrolysis of acyl-CoAs to the free fatty acid and coenzyme A (CoASH), providing the potential to regulate intracellular levels of acyl-CoAs, free fatty acids and CoASH. Contributes to growth on fatty acids. In Saccharomyces cerevisiae (strain ATCC 204508 / S288c) (Baker's yeast), this protein is Peroxisomal acyl-coenzyme A thioester hydrolase 1 (TES1).